We begin with the raw amino-acid sequence, 238 residues long: Auxin-responsive protein IAA2 (238 aa).

Residues 24–28 (LCLGL) carry the EAR-like (transcriptional repression) motif. 3 stretches are compositionally biased toward low complexity: residues 33–44 (SSSSSSKPSEGS), 59–69 (ASKPSGAAAAA), and 85–94 (ASSSSSSSKQ). 2 disordered regions span residues 33–69 (SSSSSSKPSEGSTAAPAFALRSNGTNASKPSGAAAAA) and 82–114 (RNLASSSSSSSKQAPPPPSSSPQNGDKASKDGG). A PB1 domain is found at 118 to 216 (GMFVKINMDG…TAKRLRVLKS (99 aa)). Residues 217–238 (SDLPPPSLMRAAGSRKRAAADS) are disordered. Positions 229-238 (GSRKRAAADS) are enriched in basic residues.

Belongs to the Aux/IAA family. As to quaternary structure, homodimers and heterodimers. Highly expressed in flowers.

The protein resides in the nucleus. Aux/IAA proteins are short-lived transcriptional factors that function as repressors of early auxin response genes at low auxin concentrations. This is Auxin-responsive protein IAA2 (IAA2) from Oryza sativa subsp. japonica (Rice).